A 156-amino-acid chain; its full sequence is Xanthocillin biosynthesis cluster protein D (156 aa).

Residues Asn107 and Asn120 are each glycosylated (N-linked (GlcNAc...) asparagine). Residues 131–153 form a helical membrane-spanning segment; sequence IHLNAIALVATVWYGFTLSSSLL.

It is found in the membrane. It functions in the pathway secondary metabolite biosynthesis. Its function is as follows. Part of the gene cluster that mediates the biosynthesis of the isocyanide xanthocillin and its derivatives. The first step of the pathway consists in the conversion of tyrosine into a vinyl-isonitrile intermediate by the isocyanide synthase xanB. Subsequent oxidative dimerization of this intermediate to form xanthocillin may involve the cytochrome P450 monooxygenase xanG, whose expression is coregulated with that of XanB. Xanthocillin can be further modified by the isonitrile hydratase-like protein xanA which introduces N-formyl groups and the methyltransferase xanE which introduces methyl groups, leading to the production of several derivatives including fumiformamide. Finally, fumiformamide can be subject to both oxidative and reductive cyclization to yield melanocins E and F, respectively. In Aspergillus fumigatus (strain ATCC MYA-4609 / CBS 101355 / FGSC A1100 / Af293) (Neosartorya fumigata), this protein is Xanthocillin biosynthesis cluster protein D.